The following is a 745-amino-acid chain: F-box only protein 30 (745 aa).

A TRAF-type zinc finger spans residues Glu-48–Asn-109. Disordered regions lie at residues Asn-211–Gln-231 and Gly-305–Thr-324. The segment covering Gln-222 to Gln-231 has biased composition (basic and acidic residues). A compositionally biased stretch (polar residues) spans Gly-305–Asn-314. The 49-residue stretch at Asn-610–Ile-658 folds into the F-box domain.

In terms of assembly, part of a SCF (SKP1-cullin-F-box) protein ligase complex. Interacts with SKP1, CUL1 and RBX1/ROC1. In terms of processing, auto-ubiquitinated. Post-translationally, may be neddylated. Neddylation may be required for E3 ligase activity.

It functions in the pathway protein modification; protein ubiquitination. Its function is as follows. Substrate-recognition component of the SCF (SKP1-CUL1-F-box protein)-type E3 ubiquitin ligase complex. Required for muscle atrophy following denervation. The protein is F-box only protein 30 (FBXO30) of Homo sapiens (Human).